The primary structure comprises 365 residues: Mannitol dehydrogenase (365 aa).

Residues Cys-50, His-72, Cys-103, Cys-106, Cys-109, Cys-117, and Cys-166 each contribute to the Zn(2+) site.

It belongs to the zinc-containing alcohol dehydrogenase family. It depends on Zn(2+) as a cofactor.

It localises to the cytoplasm. It catalyses the reaction D-mannitol + NAD(+) = D-mannose + NADH + H(+). In terms of biological role, oxidizes mannitol to mannose. Provides the initial step by which translocated mannitol is committed to central metabolism and, by regulating mannitol pool size, is important in regulating salt tolerance at the cellular level. This is Mannitol dehydrogenase (MTD) from Apium graveolens (Celery).